The chain runs to 105 residues: Nucleoid-associated protein ABC0038 (105 aa).

Positions 1–22 (MEMKNMGNMMKQMQKMQKQMMK) are enriched in low complexity. Residues 1–26 (MEMKNMGNMMKQMQKMQKQMMKAQEE) are disordered.

It belongs to the YbaB/EbfC family. Homodimer.

Its subcellular location is the cytoplasm. It is found in the nucleoid. Its function is as follows. Binds to DNA and alters its conformation. May be involved in regulation of gene expression, nucleoid organization and DNA protection. This is Nucleoid-associated protein ABC0038 from Shouchella clausii (strain KSM-K16) (Alkalihalobacillus clausii).